The sequence spans 191 residues: Calcium-activated potassium channel subunit beta-1 (191 aa).

Over 1-18 (MVKKLVMAQKRGETRALC) the chain is Cytoplasmic. A helical transmembrane segment spans residues 19 to 39 (LGVTMVVCAVITYYILVTTVL). Over 40 to 157 (PLYQKSVWTQ…FQRLYGPQAL (118 aa)) the chain is Extracellular. 2 N-linked (GlcNAc...) asparagine glycosylation sites follow: Asn80 and Asn142. Residues 158–178 (LFSLFWPTFLLTGGLLIIAMV) traverse the membrane as a helical segment. At 179 to 191 (KSNQYLSILAAQK) the chain is on the cytoplasmic side.

Belongs to the KCNMB (TC 8.A.14.1) family. KCNMB1 subfamily. Interacts with KCNMA1 tetramer. There are probably 4 molecules of KCMNB1 per KCNMA1 tetramer. N-glycosylated. As to expression, abundantly expressed in smooth muscle. Low levels of expression in most other tissues. Within the brain, relatively high levels found in hippocampus and corpus callosum.

The protein localises to the membrane. Regulatory subunit of the calcium activated potassium KCNMA1 (maxiK) channel. Modulates the calcium sensitivity and gating kinetics of KCNMA1, thereby contributing to KCNMA1 channel diversity. Increases the apparent Ca(2+)/voltage sensitivity of the KCNMA1 channel. It also modifies KCNMA1 channel kinetics and alters its pharmacological properties. It slows down the activation and the deactivation kinetics of the channel. Acts as a negative regulator of smooth muscle contraction by enhancing the calcium sensitivity to KCNMA1. Its presence is also a requirement for internal binding of the KCNMA1 channel opener dehydrosoyasaponin I (DHS-1) triterpene glycoside and for external binding of the agonist hormone 17-beta-estradiol (E2). Increases the binding activity of charybdotoxin (CTX) toxin to KCNMA1 peptide blocker by increasing the CTX association rate and decreasing the dissociation rate. In Homo sapiens (Human), this protein is Calcium-activated potassium channel subunit beta-1 (KCNMB1).